Here is a 149-residue protein sequence, read N- to C-terminus: D-aminoacyl-tRNA deacylase (149 aa).

The Gly-cisPro motif, important for rejection of L-amino acids motif lies at 137 to 138 (GP).

It belongs to the DTD family. Homodimer.

It localises to the cytoplasm. It catalyses the reaction glycyl-tRNA(Ala) + H2O = tRNA(Ala) + glycine + H(+). The catalysed reaction is a D-aminoacyl-tRNA + H2O = a tRNA + a D-alpha-amino acid + H(+). Functionally, an aminoacyl-tRNA editing enzyme that deacylates mischarged D-aminoacyl-tRNAs. Also deacylates mischarged glycyl-tRNA(Ala), protecting cells against glycine mischarging by AlaRS. Acts via tRNA-based rather than protein-based catalysis; rejects L-amino acids rather than detecting D-amino acids in the active site. By recycling D-aminoacyl-tRNA to D-amino acids and free tRNA molecules, this enzyme counteracts the toxicity associated with the formation of D-aminoacyl-tRNA entities in vivo and helps enforce protein L-homochirality. The sequence is that of D-aminoacyl-tRNA deacylase from Clostridium botulinum (strain Kyoto / Type A2).